Consider the following 500-residue polypeptide: Raftlin-2 (500 aa).

Gly2 carries the N-myristoyl glycine lipid modification. A lipid anchor (S-palmitoyl cysteine) is attached at Cys3. The disordered stretch occupies residues 203–236; it reads GHLSESGVEEEPQHESGQHQTERNSSPSYANPKR. Residues 213–224 show a composition bias toward basic and acidic residues; that stretch reads EPQHESGQHQTE. Ser404 is subject to Phosphoserine. The disordered stretch occupies residues 406 to 500; the sequence is AQTPERKGSR…EEGVTQVTCM (95 aa). Phosphothreonine is present on Thr408. Positions 409 to 424 are enriched in basic and acidic residues; that stretch reads PERKGSRLLKGEDRNK. The segment covering 426–438 has biased composition (polar residues); the sequence is SSRSLGLDTNASQ. Ser429 carries the post-translational modification Phosphoserine. Residues 467–478 show a composition bias toward low complexity; that stretch reads SDSFSGFSSSDS.

The protein belongs to the raftlin family. Expressed in B-cells, heart, brain, spleen, large intestine and lung. Expressed in dendritic cells and macrophages.

The protein localises to the cell membrane. Upon bacterial lipopolysaccharide stimulation, mediates clathrin-dependent internalization of TLR4 in dendritic cells, resulting in activation of TICAM1-mediated signaling and subsequent IFNB1 production. May regulate B-cell antigen receptor-mediated signaling. The sequence is that of Raftlin-2 (Rftn2) from Mus musculus (Mouse).